We begin with the raw amino-acid sequence, 432 residues long: Adenylosuccinate synthetase (432 aa).

GTP is bound by residues 13–19 (GDEGKGK) and 41–43 (GHT). The Proton acceptor role is filled by D14. Residues D14 and G41 each coordinate Mg(2+). IMP is bound by residues 14-17 (DEGK), 39-42 (NAGH), T130, R144, Q225, T240, and R304. H42 functions as the Proton donor in the catalytic mechanism. A substrate-binding site is contributed by 300–306 (ATTGRRR). Residues R306, 332–334 (KLD), and 415–417 (STG) each bind GTP.

It belongs to the adenylosuccinate synthetase family. Homodimer. Mg(2+) is required as a cofactor.

The protein resides in the cytoplasm. It catalyses the reaction IMP + L-aspartate + GTP = N(6)-(1,2-dicarboxyethyl)-AMP + GDP + phosphate + 2 H(+). Its pathway is purine metabolism; AMP biosynthesis via de novo pathway; AMP from IMP: step 1/2. Functionally, plays an important role in the de novo pathway of purine nucleotide biosynthesis. Catalyzes the first committed step in the biosynthesis of AMP from IMP. The protein is Adenylosuccinate synthetase of Salmonella agona (strain SL483).